A 63-amino-acid chain; its full sequence is Large ribosomal subunit protein uL29 (63 aa).

Belongs to the universal ribosomal protein uL29 family.

In Bordetella avium (strain 197N), this protein is Large ribosomal subunit protein uL29.